The primary structure comprises 335 residues: UPF0324 membrane protein gbs1193 (335 aa).

A run of 9 helical transmembrane segments spans residues Ser20–Ile42, Ile57–Met79, Val84–Leu106, Ile116–Val138, Ser151–Leu173, Gly210–Tyr232, Val253–Ile275, Phe285–Ile304, and Ile311–Gly333.

The protein belongs to the UPF0324 family.

The protein resides in the cell membrane. The polypeptide is UPF0324 membrane protein gbs1193 (Streptococcus agalactiae serotype III (strain NEM316)).